The following is a 205-amino-acid chain: GTP cyclohydrolase-2 (205 aa).

Residue 49–53 participates in GTP binding; the sequence is RLHSE. Positions 54, 65, and 67 each coordinate Zn(2+). GTP contacts are provided by residues Gln-70, 92–94, and Thr-114; that span reads EGR. Residue Asp-126 is the Proton acceptor of the active site. The active-site Nucleophile is Arg-128. GTP-binding residues include Thr-149 and Lys-154.

Belongs to the GTP cyclohydrolase II family. Zn(2+) serves as cofactor.

It carries out the reaction GTP + 4 H2O = 2,5-diamino-6-hydroxy-4-(5-phosphoribosylamino)-pyrimidine + formate + 2 phosphate + 3 H(+). The protein operates within cofactor biosynthesis; riboflavin biosynthesis; 5-amino-6-(D-ribitylamino)uracil from GTP: step 1/4. Catalyzes the conversion of GTP to 2,5-diamino-6-ribosylamino-4(3H)-pyrimidinone 5'-phosphate (DARP), formate and pyrophosphate. The polypeptide is GTP cyclohydrolase-2 (Pseudomonas aeruginosa (strain LESB58)).